A 405-amino-acid chain; its full sequence is Argininosuccinate synthase (405 aa).

ATP contacts are provided by residues 10–18 and A37; that span reads AYSGGLDTS. 2 residues coordinate L-citrulline: Y88 and S93. G118 contributes to the ATP binding site. Residues T120, N124, and D125 each contribute to the L-aspartate site. N124 contributes to the L-citrulline binding site. Residues R128, S179, S188, E264, and Y276 each coordinate L-citrulline.

Belongs to the argininosuccinate synthase family. Type 1 subfamily. As to quaternary structure, homotetramer.

Its subcellular location is the cytoplasm. The enzyme catalyses L-citrulline + L-aspartate + ATP = 2-(N(omega)-L-arginino)succinate + AMP + diphosphate + H(+). Its pathway is amino-acid biosynthesis; L-arginine biosynthesis; L-arginine from L-ornithine and carbamoyl phosphate: step 2/3. The polypeptide is Argininosuccinate synthase (Nitrosococcus oceani (strain ATCC 19707 / BCRC 17464 / JCM 30415 / NCIMB 11848 / C-107)).